The sequence spans 83 residues: U1-theraphotoxin-Hs1f (83 aa).

Positions 1-21 (MKVTLIAILTCAAVLVLHTTA) are cleaved as a signal peptide. Positions 22 to 48 (AEELEESQLMEVGMPDTELAAVDEERL) are excised as a propeptide. Intrachain disulfides connect C51/C64, C55/C75, and C69/C80.

It belongs to the neurotoxin 12 (Hwtx-2) family. 02 (Hwtx-2) subfamily. As to expression, expressed by the venom gland.

Its subcellular location is the secreted. In terms of biological role, lethal neurotoxin that blocks neuromuscular transmission. The polypeptide is U1-theraphotoxin-Hs1f (Cyriopagopus schmidti (Chinese bird spider)).